The sequence spans 172 residues: Caltractin (172 aa).

Residues 1 to 23 (MQKYGSKKIGATSATSSNKQKVQ) form a disordered region. The segment covering 12–21 (TSATSSNKQK) has biased composition (polar residues). 4 EF-hand domains span residues 29–64 (EQRQ…LGFE), 65–99 (PKKE…KMSE), 101–136 (DSHA…LGEN), and 137–172 (MTDE…TNLF). Ca(2+) contacts are provided by Asp42, Asp44, Ser46, Lys48, and Glu53.

The protein belongs to the centrin family. As to quaternary structure, monomer.

It is found in the cytoplasm. Its subcellular location is the cytoskeleton. The protein localises to the microtubule organizing center. The protein resides in the centrosome. Functionally, plays a fundamental role in microtubule-organizing center structure and function. This Naegleria gruberi (Amoeba) protein is Caltractin (CTN).